Here is a 360-residue protein sequence, read N- to C-terminus: Magnesium-chelatase subunit ChlI (360 aa).

50–57 (GDRGTGKS) lines the ATP pocket. The cysteines at positions 285 and 327 are disulfide-linked.

It belongs to the Mg-chelatase subunits D/I family. As to quaternary structure, the magnesium chelatase complex is a heterotrimer consisting of subunits CHLI, CHLD and CHLH.

It is found in the plastid. The protein localises to the chloroplast. The enzyme catalyses protoporphyrin IX + Mg(2+) + ATP + H2O = Mg-protoporphyrin IX + ADP + phosphate + 3 H(+). It functions in the pathway porphyrin-containing compound metabolism; chlorophyll biosynthesis. With respect to regulation, redox regulation; active in reducing conditions, inactive in oxidizing conditions. Thioredoxins f and m mediate the reversible reductive activation of oxidized CHLI. Its function is as follows. Involved in chlorophyll biosynthesis. Catalyzes the insertion of magnesium ion into protoporphyrin IX to yield Mg-protoporphyrin IX. The magnesium-chelatase is a complex of three subunits, CHLI, CHLD and CHLH. The reaction takes place in two steps, with an ATP-dependent activation followed by an ATP-dependent chelation step. The sequence is that of Magnesium-chelatase subunit ChlI (chlI) from Mesostigma viride (Green alga).